Reading from the N-terminus, the 293-residue chain is Phosphatidylcholine-sterol acyltransferase (293 aa).

Residue Asn26 is glycosylated (N-linked (GlcNAc...) asparagine). Ser123 serves as the catalytic Nucleophile. Asn179 carries N-linked (GlcNAc...) asparagine glycosylation. Residues Cys220 and Cys263 are joined by a disulfide bond. Asp252 (charge relay system) is an active-site residue. Asn280 carries N-linked (GlcNAc...) asparagine glycosylation. The Charge relay system role is filled by His284.

Belongs to the AB hydrolase superfamily. Lipase family.

It is found in the secreted. The enzyme catalyses a sterol + a 1,2-diacyl-sn-glycero-3-phosphocholine = a sterol ester + a 1-acyl-sn-glycero-3-phosphocholine. With respect to regulation, APOA1 is the most potent activator in plasma. Also activated by APOE, APOC1 and APOA4. In terms of biological role, central enzyme in the extracellular metabolism of plasma lipoproteins. Synthesized mainly in the liver and secreted into plasma where it converts cholesterol and phosphatidylcholines (lecithins) to cholesteryl esters and lysophosphatidylcholines on the surface of high and low density lipoproteins (HDLs and LDLs). The cholesterol ester is then transported back to the liver. Has a preference for plasma 16:0-18:2 or 18:O-18:2 phosphatidylcholines. Also produced in the brain by primary astrocytes, and esterifies free cholesterol on nascent APOE-containing lipoproteins secreted from glia and influences cerebral spinal fluid (CSF) APOE- and APOA1 levels. Together with APOE and the cholesterol transporter ABCA1, plays a key role in the maturation of glial-derived, nascent lipoproteins. Required for remodeling high-density lipoprotein particles into their spherical forms. This Gerbilliscus gambianus (Gambian gerbil) protein is Phosphatidylcholine-sterol acyltransferase (LCAT).